Reading from the N-terminus, the 534-residue chain is MARGLQVPLPRLATGLLLLLSVQPWAESGKVLVVPTDGSPWLSMREALRELHARGHQAVVLTPEVNMHIKEEKFFTLTAYAVPWTQKEFDRVTLGYTQGFFETEHLLKRYSRSMAIMNNVSLALHRCCVELLHNEALIRHLNATSFDVVLTDPVNLCGAVLAKYLSIPAVFFWRYIPCDLDFKGTQCPNPSSYIPKLLTTNSDHMTFLQRVKNMLYPLALSYICHTFSAPYASLASELFQREVSVVDLVSYASVWLFRGDFVMDYPRPIMPNMVFIGGINCANGKPLSQEFEAYINASGEHGIVVFSLGSMVSEIPEKKAMAIADALGKIPQTVLWRYTGTRPSNLANNTILVKWLPQNDLLGHPMTRAFITHAGSHGVYESICNGVPMVMMPLFGDQMDNAKRMETKGAGVTLNVLEMTSEDLENALKAVINDKSYKENIMRLSSLHKDRPVEPLDLAVFWVEFVMRHKGAPHLRPAAHDLTWYQYHSLDVIGFLLAVVLTVAFITFKCCAYGYRKCLGKKGRVKKAHKSKTH.

The first 28 residues, 1–28 (MARGLQVPLPRLATGLLLLLSVQPWAES), serve as a signal peptide directing secretion. N-linked (GlcNAc...) asparagine glycans are attached at residues Asn119, Asn142, Asn296, and Asn348. The helical transmembrane segment at 492-508 (VIGFLLAVVLTVAFITF) threads the bilayer.

Belongs to the UDP-glycosyltransferase family. Homodimer. Homooligomer. Interacts with UGT1A1, UGT1A3, UGT1A6, UGT1A7, UGT1A8, UGT1A9 and UGT1A10 to form heterodimers. Isoform 1 interacts with isoform 2/i2 suggesting that oligomerization is involved in negative regulation of transferase activity by isoform 2. Isoform 1 also interacts with respective i2 isoforms of UGT1A1, UGT1A3, UGT1A6, UGT1A7, UGT1A8, UGT1A9 and UGT1A10. In terms of tissue distribution, expressed in liver. Expressed in kidney, colon and small intestine. Not expressed in esophagus. Not expressed in skin. Expressed in liver, kidney, colon, esophagus and small intestine.

It localises to the endoplasmic reticulum membrane. It carries out the reaction glucuronate acceptor + UDP-alpha-D-glucuronate = acceptor beta-D-glucuronoside + UDP + H(+). The enzyme catalyses calcidiol + UDP-alpha-D-glucuronate = calcidiol 25-O-(beta-D-glucuronide) + UDP + H(+). The catalysed reaction is calcidiol + UDP-alpha-D-glucuronate = calcidiol 3-O-(beta-D-glucuronide) + UDP + H(+). It catalyses the reaction calcitriol + UDP-alpha-D-glucuronate = calcitriol 25-O-(beta-D-glucuronide) + UDP + H(+). It carries out the reaction (5Z,8Z,11Z,14Z)-eicosatetraenoate + UDP-alpha-D-glucuronate = O-[(5Z),(8Z),(11Z),(14Z)-eicosatetraenoyl]-beta-D-glucuronate + UDP. The enzyme catalyses 15-hydroxy-(5Z,8Z,11Z,13E)-eicosatetraenoate + UDP-alpha-D-glucuronate = 15-O-(beta-D-glucuronosyl)-(5Z,8Z,11Z,14Z)-eicosatetraenoate + UDP + H(+). The catalysed reaction is 20-hydroxy-(5Z,8Z,11Z,14Z)-eicosatetraenoate + UDP-alpha-D-glucuronate = 20-O-(beta-D-glucuronosyl)-(5Z,8Z,11Z,14Z)-eicosatetraenoate + UDP + H(+). Functionally, UDP-glucuronosyltransferase (UGT) that catalyzes phase II biotransformation reactions in which lipophilic substrates are conjugated with glucuronic acid to increase the metabolite's water solubility, thereby facilitating excretion into either the urine or bile. Essential for the elimination and detoxification of drugs, xenobiotics and endogenous compounds. Involved in the glucuronidation of calcidiol, which is the major circulating form of vitamin D3 essential for the regulation of calcium and phosphate homeostasis. Also glucuronidates the biologically active form of vitamin D3, calcitriol, probably leading to its biliary transport and intestinal reabsorption. Involved in the glucuronidation of arachidonic acid (AA) and AA-derived eicosanoids including 15-HETE, 20-HETE and PGB1. Its function is as follows. Lacks UDP-glucuronosyltransferase (UGT) activity but acts as a negative regulator of isoform 1. This is UDP-glucuronosyltransferase 1A4 from Homo sapiens (Human).